We begin with the raw amino-acid sequence, 582 residues long: MEVKRTKGVLKRIAGPVVTAVNLDAHMYDVVKVGDEQLMGEVIKIKGEDIIIQVYEDTSGIKPGEPVENTGLSLSVELGPGLLTSIYDGIQRPLEVLVEKMGNFIERGVTAPGLSHDKKWEFKPIKKAGDMVTPGTIIGEVQETNIVHKIMVPPYCDAGKIKDIKSGSFTIDEIICTLDNGAEIAMMHKWPVRMPRPVTEKLNPDIPLITGQRILDGLFPVAKGGTAAIPGPFGSGKTVTQQALAKWSDAEIVVYIGCGERGNEMTEVLTEFPELEDPKTGRPLMERTVLIANTSNMPVAAREASVYTGITIAEYFRDMGYDVSLMADSTSRWAEAMREISSRLEEMPGEEGYPAYLAARLSEFYERAGRVNTLNKDFGSVTVIGAVSPPGGDFSEPVTQNTLRIVKCFWALDAKLSQRRHFPAINWLNSYSLYLDTLSQYYDENVSPEWNPLRTWAMEVLQKEAELQEIVQLVGSDALPDEEQVTIEVARMLREIFLQQNAFDPVDTYCDMTKQFDILKAIRFYSDQAYAALKAGVITSQITGLKAKNDLPQIKYVKEYKPEIERIVKTMESEFTKLREAA.

231-238 (GPFGSGKT) contacts ATP.

The protein belongs to the ATPase alpha/beta chains family. In terms of assembly, has multiple subunits with at least A(3), B(3), C, D, E, F, H, I and proteolipid K(x).

The protein localises to the cell membrane. It catalyses the reaction ATP + H2O + 4 H(+)(in) = ADP + phosphate + 5 H(+)(out). Functionally, component of the A-type ATP synthase that produces ATP from ADP in the presence of a proton gradient across the membrane. The A chain is the catalytic subunit. The sequence is that of A-type ATP synthase subunit A 1 from Methanospirillum hungatei JF-1 (strain ATCC 27890 / DSM 864 / NBRC 100397 / JF-1).